The following is a 249-amino-acid chain: Proteasome subunit alpha type-7-1 (249 aa).

At serine 177 the chain carries Phosphoserine.

Belongs to the peptidase T1A family. The 26S proteasome consists of a 20S proteasome core and two 19S regulatory subunits. The 20S proteasome core is composed of 28 subunits that are arranged in four stacked rings, resulting in a barrel-shaped structure. The two end rings are each formed by seven alpha subunits, and the two central rings are each formed by seven beta subunits. The catalytic chamber with the active sites is on the inside of the barrel. Interacts with PI31; this interaction is reduced by PI31 ADP-ribosylation.

It is found in the cytoplasm. The protein resides in the nucleus. Functionally, the proteasome is a multicatalytic proteinase complex which is characterized by its ability to cleave peptides with Arg, Phe, Tyr, Leu, and Glu adjacent to the leaving group at neutral or slightly basic pH. The proteasome has an ATP-dependent proteolytic activity. The sequence is that of Proteasome subunit alpha type-7-1 (Prosalpha4) from Drosophila melanogaster (Fruit fly).